The chain runs to 109 residues: Large ribosomal subunit protein uL1 (109 aa).

The protein belongs to the universal ribosomal protein uL1 family. As to quaternary structure, part of the 50S ribosomal subunit.

Binds directly to 23S rRNA. The L1 stalk is quite mobile in the ribosome, and is involved in E site tRNA release. Functionally, protein L1 is also a translational repressor protein, it controls the translation of the L11 operon by binding to its mRNA. This is Large ribosomal subunit protein uL1 (rplA) from Aquifex pyrophilus.